The primary structure comprises 66 residues: Large ribosomal subunit protein uL29 (66 aa).

It belongs to the universal ribosomal protein uL29 family.

This chain is Large ribosomal subunit protein uL29, found in Agrobacterium fabrum (strain C58 / ATCC 33970) (Agrobacterium tumefaciens (strain C58)).